The chain runs to 595 residues: MFS-type transporter phomT (595 aa).

Positions 1-11 (MESDGKSDRTK) are enriched in basic and acidic residues. The tract at residues 1 to 62 (MESDGKSDRT…HVSADDGPVD (62 aa)) is disordered. Residues 30–48 (PGHSTDTEGNGSDNNNTQV) show a composition bias toward polar residues. N-linked (GlcNAc...) asparagine glycans are attached at residues N39 and N44. 3 consecutive transmembrane segments (helical) span residues 91–111 (IILL…TIVA), 126–146 (DVGW…LFFG), and 156–176 (WVFL…GVAP). N-linked (GlcNAc...) asparagine glycosylation is present at N177. Transmembrane regions (helical) follow at residues 186–206 (AVAG…IAFS), 217–237 (ALIS…GGVF), and 245–265 (WCFY…VFFL). A glycan (N-linked (GlcNAc...) asparagine) is linked at N277. 7 consecutive transmembrane segments (helical) span residues 290 to 310 (IGTA…QWGG), 320 to 340 (VVAL…LQFW), 362 to 382 (VFTG…PIWF), 409 to 429 (IVGG…YALP), 451 to 471 (WIGY…QGIV), 483 to 503 (AIGT…FVSV), and 559 to 579 (VIWT…AVIF).

It belongs to the major facilitator superfamily. TCR/Tet family.

It localises to the cell membrane. Its function is as follows. MFS-type transporter; part of the gene cluster that mediates the biosynthesis of the phomopsins, a group of hexapeptide mycotoxins which infects lupins and causes lupinosis disease in livestock. PhomT is likely to be involved in the cellular export of phomopsins. This is MFS-type transporter phomT from Diaporthe leptostromiformis (Lupinosis disease fungus).